A 145-amino-acid chain; its full sequence is Peroxide operon regulator (145 aa).

The interval 1–78 is DNA-binding; sequence MAAHELKEAL…SGLVKELTYG (78 aa). Zn(2+)-binding residues include Cys-96, Cys-99, Cys-136, and Cys-139.

Belongs to the Fur family. As to quaternary structure, homodimer. The cofactor is Mn(2+). Fe(2+) is required as a cofactor. Requires Zn(2+) as cofactor. Possibly oxidized on a cysteine residue; the Cys-SOH formed in response to oxidative signaling may rapidly react with a Cys-SH to form a disulfide bond, leading to the loss of metal ion and inactivation of repressor function. Oxidized PerR can be further reduced by thiol reductants and repressor activity restored.

It localises to the cytoplasm. Hydrogen and organic peroxide sensor. Represses the expression of a regulon of peroxide-inducible genes such as katA, ahpC, ahpF, the heme biosynthesis operon (hemAXCDBL), fur, perR, zosA and mrgA. This Bacillus subtilis (strain 168) protein is Peroxide operon regulator (perR).